Here is a 638-residue protein sequence, read N- to C-terminus: Neuroendocrine convertase 2 (638 aa).

The N-terminal stretch at 1 to 25 (MKGGCVSQWKAAAGFLFCVMVFASA) is a signal peptide. Positions 26–109 (ERPVFTNHFL…QQEGFDRKKR (84 aa)) are excised as a propeptide. The Peptidase S8 domain occupies 129 to 453 (QWYLINTGQA…YGVLDAGAMV (325 aa)). Residues D167 and H208 each act as charge relay system in the active site. 2 cysteine pairs are disulfide-bonded: C225–C376 and C317–C347. N375 carries N-linked (GlcNAc...) asparagine glycosylation. S384 (charge relay system) is an active-site residue. Residues 461–597 (TVPERFHCVG…TLMLHGTQSA (137 aa)) enclose the P/Homo B domain. An intrachain disulfide couples C468 to C494. 2 N-linked (GlcNAc...) asparagine glycosylation sites follow: N514 and N524.

The protein belongs to the peptidase S8 family. Furin subfamily.

Its subcellular location is the cytoplasmic vesicle. The protein resides in the secretory vesicle. The protein localises to the secreted. It carries out the reaction Release of protein hormones and neuropeptides from their precursors, generally by hydrolysis of -Lys-Arg-|- bonds.. Functionally, serine endopeptidase which is involved in the processing of hormone and other protein precursors at sites comprised of pairs of basic amino acid residues. Responsible for the release of glucagon from proglucagon in pancreatic A cells. The polypeptide is Neuroendocrine convertase 2 (PCSK2) (Pongo abelii (Sumatran orangutan)).